The chain runs to 160 residues: Single-stranded DNA-binding protein 3 (160 aa).

The SSB domain occupies 2–104 (MNRVVLVGRL…IVAESVQFLE (103 aa)). A compositionally biased stretch (polar residues) spans 106 to 133 (KQNGAGGSTSNNNQSETNYSNDNKTSSY). Positions 106 to 160 (KQNGAGGSTSNNNQSETNYSNDNKTSSYRADRSQNGDSFANEGAPVDINPDDLPF) are disordered.

As to quaternary structure, homotetramer.

This chain is Single-stranded DNA-binding protein 3 (ssb3), found in Listeria innocua serovar 6a (strain ATCC BAA-680 / CLIP 11262).